Here is a 155-residue protein sequence, read N- to C-terminus: Protein archease-like (155 aa).

The Ca(2+) site is built by Asp-26, Asp-154, and Ile-155.

This sequence belongs to the archease family.

Functionally, component of the tRNA-splicing ligase complex required to facilitate the enzymatic turnover of catalytic subunit RtcB. The polypeptide is Protein archease-like (Caenorhabditis briggsae).